Consider the following 88-residue polypeptide: Small ribosomal subunit protein bS20 (88 aa).

Belongs to the bacterial ribosomal protein bS20 family.

Binds directly to 16S ribosomal RNA. This Methylorubrum populi (strain ATCC BAA-705 / NCIMB 13946 / BJ001) (Methylobacterium populi) protein is Small ribosomal subunit protein bS20.